The primary structure comprises 193 residues: Oligoribonuclease (193 aa).

One can recognise an Exonuclease domain in the interval 8 to 171; that stretch reads LVWLDLEMTG…EDIRESVAEL (164 aa). Tyr129 is a catalytic residue.

The protein belongs to the oligoribonuclease family.

The protein resides in the cytoplasm. 3'-to-5' exoribonuclease specific for small oligoribonucleotides. This is Oligoribonuclease from Alkalilimnicola ehrlichii (strain ATCC BAA-1101 / DSM 17681 / MLHE-1).